Reading from the N-terminus, the 147-residue chain is MALKRINKELSDLARDPPAQCSAGPVGDDMFHWQATIMGPNDSPYQGGVFFLTIHFPTDYPFKPPKVAFTTRIYHPNINSNDSICLDILRSQWSPALTISKVLLSICSLLCDPNPDDPLVPEIARIYKTDRDKYNRISREWTQKYAM.

The region spanning 1 to 147 is the UBC core domain; sequence MALKRINKEL…SREWTQKYAM (147 aa). The cysteines at positions 21 and 107 are disulfide-linked. The Glycyl thioester intermediate role is filled by cysteine 85.

The protein belongs to the ubiquitin-conjugating enzyme family. Interacts with SCF (SKP1-CUL1-F-box protein) E3 ubiquitin ligase complex; when Cullin is neddylated, the interaction between the E2 and the SCF complex is strengthened. Interacts with DAPK3. Interacts with BRCA1; the DNA damage checkpoint promotes the association with BRCA1 after ionizing radiation. Interacts non-covalently with ubiquitin. Interacts with E3 ubiquitin-protein ligase CBLC. Interacts with UBTD1. Interacts with RIGI and RNF135; involved in RIGI ubiquitination and activation. Post-translationally, phosphorylated by AURKB.

Its subcellular location is the cell membrane. It localises to the endosome membrane. The enzyme catalyses S-ubiquitinyl-[E1 ubiquitin-activating enzyme]-L-cysteine + [E2 ubiquitin-conjugating enzyme]-L-cysteine = [E1 ubiquitin-activating enzyme]-L-cysteine + S-ubiquitinyl-[E2 ubiquitin-conjugating enzyme]-L-cysteine.. It catalyses the reaction S-ubiquitinyl-[E1 ubiquitin-activating enzyme]-L-cysteine + [acceptor protein]-L-lysine = [E1 ubiquitin-activating enzyme]-L-cysteine + N(6)-monoubiquitinyl-[acceptor protein]-L-lysine.. It functions in the pathway protein modification; protein ubiquitination. In terms of biological role, accepts ubiquitin from the E1 complex and catalyzes its covalent attachment to other proteins. In vitro catalyzes 'Lys-11'-, as well as 'Lys-48'-linked polyubiquitination. Cooperates with the E2 CDC34 and the SCF(FBXW11) E3 ligase complex for the polyubiquitination of NFKBIA leading to its subsequent proteasomal degradation. Acts as an initiator E2, priming the phosphorylated NFKBIA target at positions 'Lys-21' and/or 'Lys-22' with a monoubiquitin. Ubiquitin chain elongation is then performed by CDC34, building ubiquitin chains from the UBE2D3-primed NFKBIA-linked ubiquitin. Also acts as an initiator E2, in conjunction with RNF8, for the priming of PCNA. Monoubiquitination of PCNA, and its subsequent polyubiquitination, are essential events in the operation of the DNA damage tolerance (DDT) pathway that is activated after DNA damage caused by UV or chemical agents during S-phase. Associates with the BRCA1/BARD1 E3 ligase complex to perform ubiquitination at DNA damage sites following ionizing radiation leading to DNA repair. Targets DAPK3 for ubiquitination which influences promyelocytic leukemia protein nuclear body (PML-NB) formation in the nucleus. In conjunction with the MDM2 and TOPORS E3 ligases, functions ubiquitination of p53/TP53. In conjunction with the CBL E3 ligase, targets EGFR for polyubiquitination at the plasma membrane as well as during its internalization and transport on endosomes. In conjunction with the STUB1 E3 quality control E3 ligase, ubiquitinates unfolded proteins to catalyze their immediate destruction. Together with RNF135, catalyzes the viral RNA-dependent 'Lys-63'-linked polyubiquitination of RIGI to activate the downstream signaling pathway that leads to interferon beta production. Together with ZNF598, catalyzes ubiquitination of 40S ribosomal proteins in response to ribosome collisions. In cooperation with the GATOR2 complex, catalyzes 'Lys-6'-linked ubiquitination of NPRL2. This is Ubiquitin-conjugating enzyme E2 D3 (UBE2D3) from Bos taurus (Bovine).